We begin with the raw amino-acid sequence, 458 residues long: Vasoactive intestinal polypeptide receptor 1 (458 aa).

An N-terminal signal peptide occupies residues 1-31 (MRPLSPPPAGWFCVLAGVLACVLGPVGSWAV). Residues 32-142 (GLQQEECDYL…DEQQTVFYNS (111 aa)) are Extracellular-facing. 5 disulfide bridges follow: Cys38–Cys209, Cys51–Cys73, Cys64–Cys106, Cys87–Cys123, and Cys216–Cys286. Residues Asn59, Asn70, Asn101, and Asn105 are each glycosylated (N-linked (GlcNAc...) asparagine). The chain crosses the membrane as a helical span at residues 143 to 167 (VKTGYTIGYSLSLAALLVATAILSL). At 168-175 (FRKLHCTR) the chain is on the cytoplasmic side. A helical transmembrane segment spans residues 176 to 197 (NYIHMHLFISFILRATAVFIKD). The Extracellular segment spans residues 198–217 (LALFDSEESDHCSKGSVGCK). Residues 218-242 (AAVVLFQYCVMANFFWLLVEGLYLH) form a helical membrane-spanning segment. The Cytoplasmic portion of the chain corresponds to 243–255 (TLLAVSFFSERKY). Residues 256–277 (FWGYIFVGWGVPSTFIMVWTVV) traverse the membrane as a helical segment. Residues 278–292 (RIHFEDYGCWDTIHS) lie on the Extracellular side of the membrane. A helical transmembrane segment spans residues 293-317 (SLWWIIKAPILASILVNFILFIRII). At 318-339 (GILVQKLRPPDVGKSDNSPYSR) the chain is on the cytoplasmic side. A helical membrane pass occupies residues 340 to 360 (LAKSTLLLIPLFGVHYIMFAF). Over 361-368 (FPDNFKAE) the chain is Extracellular. Residues 369–392 (VKMVFELIVGSFQGCVVAILYCFL) form a helical membrane-spanning segment. Over 393-458 (NGEVQAELRR…SSFQAEVSLV (66 aa)) the chain is Cytoplasmic.

Belongs to the G-protein coupled receptor 2 family. In terms of assembly, interacts with ADCYAP1/PACAP; activated by both PACAP27 and PACAP38 neuropeptides. Interacts with VIP; the interaction results in VIPR1 activation.

It localises to the cell membrane. In terms of biological role, g protein-coupled receptor activated by the neuropeptides vasoactive intestinal peptide (VIP) and pituitary adenylate cyclase-activating polypeptide (ADCYAP1/PACAP). Binds VIP and both PACAP27 and PACAP38 bioactive peptides with the following order of ligand affinity VIP = PACAP27 &gt; PACAP38. Ligand binding causes a conformation change that triggers signaling via guanine nucleotide-binding proteins (G proteins) and modulates the activity of downstream effectors. Activates cAMP-dependent pathway. This Sus scrofa (Pig) protein is Vasoactive intestinal polypeptide receptor 1 (VIPR1).